A 441-amino-acid polypeptide reads, in one-letter code: DNA primase DnaG (441 aa).

The region spanning 165 to 241 (DTIIIVEGRA…DIDYVARAPP (77 aa)) is the Toprim domain. Mg(2+)-binding residues include glutamate 171, aspartate 215, and aspartate 217. Positions 299-315 (KEEVAERGEEMESKAEG) are enriched in basic and acidic residues. The interval 299-320 (KEEVAERGEEMESKAEGAEQPT) is disordered.

Belongs to the archaeal DnaG primase family. Forms a ternary complex with MCM helicase and DNA. Component of the archaeal exosome complex. Mg(2+) is required as a cofactor.

The catalysed reaction is ssDNA + n NTP = ssDNA/pppN(pN)n-1 hybrid + (n-1) diphosphate.. In terms of biological role, RNA polymerase that catalyzes the synthesis of short RNA molecules used as primers for DNA polymerase during DNA replication. Also part of the exosome, which is a complex involved in RNA degradation. Acts as a poly(A)-binding protein that enhances the interaction between heteromeric, adenine-rich transcripts and the exosome. In Ignicoccus hospitalis (strain KIN4/I / DSM 18386 / JCM 14125), this protein is DNA primase DnaG.